Reading from the N-terminus, the 35-residue chain is uncharacterized protein (35 aa).

A helical membrane pass occupies residues 10-30 (LMITASFFAIFIIIVVSVLLL).

Its subcellular location is the membrane. This is an uncharacterized protein from Salmonella paratyphi A (strain ATCC 9150 / SARB42).